Reading from the N-terminus, the 266-residue chain is Probable metal transport system membrane protein TP_0036 (266 aa).

Transmembrane regions (helical) follow at residues 10–30 (AFVA…HLVL), 34–54 (ALMG…AVSC), 56–76 (IHPG…IEFL), 88–108 (LSIV…SGLI), 120–140 (ILVV…FCVG), 172–192 (VASV…GILV), 211–231 (FLLT…LGLV), and 238–258 (VAPG…VIAL).

The protein belongs to the ABC-3 integral membrane protein family.

Its subcellular location is the cell inner membrane. Functionally, part of an ATP-driven transport system TP_0034/TP_0035/TP_0036 for a metal. The sequence is that of Probable metal transport system membrane protein TP_0036 from Treponema pallidum (strain Nichols).